The sequence spans 367 residues: Homoserine O-acetyltransferase (367 aa).

Residues 44–350 (NVIMVEHAWT…AYGHDAFLLE (307 aa)) form the AB hydrolase-1 domain. Residue S150 is the Nucleophile of the active site. R217 serves as a coordination point for substrate. Catalysis depends on residues D311 and H344. D345 contributes to the substrate binding site.

The protein belongs to the AB hydrolase superfamily. MetX family. Homodimer.

Its subcellular location is the cytoplasm. It carries out the reaction L-homoserine + acetyl-CoA = O-acetyl-L-homoserine + CoA. It functions in the pathway amino-acid biosynthesis; L-methionine biosynthesis via de novo pathway; O-acetyl-L-homoserine from L-homoserine: step 1/1. In terms of biological role, transfers an acetyl group from acetyl-CoA to L-homoserine, forming acetyl-L-homoserine. In vitro, can also use propionyl-CoA or butiryl-CoA as acyl donor. The polypeptide is Homoserine O-acetyltransferase (Trichlorobacter lovleyi (strain ATCC BAA-1151 / DSM 17278 / SZ) (Geobacter lovleyi)).